The primary structure comprises 194 residues: Fatty acid metabolism regulator protein (194 aa).

The 61-residue stretch at 5 to 65 (RPKYMQIIDA…SLFKEKMGQF (61 aa)) folds into the HTH tetR-type domain. The segment at residues 28–47 (QVSKIAKQAGVADGTIYLYF) is a DNA-binding region (H-T-H motif).

As to quaternary structure, homodimer. Binds to DNA.

It is found in the cytoplasm. In terms of biological role, transcriptional regulator in fatty acid degradation. Represses transcription of genes required for fatty acid transport and beta-oxidation, including acdA, fadA, fadB, fadE, fadF, fadG, fadH, fadM, fadN, lcfA and lcfB. Binding of FadR to DNA is specifically inhibited by long chain fatty acyl-CoA compounds of 14-20 carbon atoms in length. In Bacillus subtilis (strain 168), this protein is Fatty acid metabolism regulator protein (fadR).